Here is a 198-residue protein sequence, read N- to C-terminus: Ribosome maturation factor RimP (198 aa).

It belongs to the RimP family.

The protein resides in the cytoplasm. Required for maturation of 30S ribosomal subunits. The protein is Ribosome maturation factor RimP of Rhizobium rhizogenes (strain K84 / ATCC BAA-868) (Agrobacterium radiobacter).